Here is a 315-residue protein sequence, read N- to C-terminus: Ribonuclease Z (315 aa).

Zn(2+) contacts are provided by His-61, His-63, Asp-65, His-66, His-151, Asp-219, and His-278. Asp-65 acts as the Proton acceptor in catalysis.

The protein belongs to the RNase Z family. As to quaternary structure, homodimer. Zn(2+) serves as cofactor.

The enzyme catalyses Endonucleolytic cleavage of RNA, removing extra 3' nucleotides from tRNA precursor, generating 3' termini of tRNAs. A 3'-hydroxy group is left at the tRNA terminus and a 5'-phosphoryl group is left at the trailer molecule.. In terms of biological role, zinc phosphodiesterase, which displays some tRNA 3'-processing endonuclease activity. Probably involved in tRNA maturation, by removing a 3'-trailer from precursor tRNA. The polypeptide is Ribonuclease Z (Clostridium botulinum (strain Alaska E43 / Type E3)).